The following is a 215-amino-acid chain: Cytochrome b6 (215 aa).

A helical transmembrane segment spans residues 32-52 (IFYCIGGITFTCFLVQVATGF). Residue cysteine 35 participates in heme c binding. Heme b-binding residues include histidine 86 and histidine 100. 3 consecutive transmembrane segments (helical) span residues 90-110 (ASMMVLMMILHVCRVYLTGGF), 116-136 (LTWVTGVIMAVCTVSFGVTGY), and 186-206 (LHTFVLPLATAVFMLMHFLMI). Residues histidine 187 and histidine 202 each contribute to the heme b site.

This sequence belongs to the cytochrome b family. PetB subfamily. In terms of assembly, the 4 large subunits of the cytochrome b6-f complex are cytochrome b6, subunit IV (17 kDa polypeptide, PetD), cytochrome f and the Rieske protein, while the 4 small subunits are PetG, PetL, PetM and PetN. The complex functions as a dimer. Heme b serves as cofactor. It depends on heme c as a cofactor.

It localises to the plastid. Its subcellular location is the chloroplast thylakoid membrane. In terms of biological role, component of the cytochrome b6-f complex, which mediates electron transfer between photosystem II (PSII) and photosystem I (PSI), cyclic electron flow around PSI, and state transitions. This Chlorella vulgaris (Green alga) protein is Cytochrome b6.